The sequence spans 431 residues: Serine hydroxymethyltransferase 2 (431 aa).

(6S)-5,6,7,8-tetrahydrofolate-binding positions include leucine 131 and 135 to 137 (GHL). Lysine 240 is modified (N6-(pyridoxal phosphate)lysine).

Belongs to the SHMT family. Homodimer. Pyridoxal 5'-phosphate is required as a cofactor.

It is found in the cytoplasm. The enzyme catalyses (6R)-5,10-methylene-5,6,7,8-tetrahydrofolate + glycine + H2O = (6S)-5,6,7,8-tetrahydrofolate + L-serine. It functions in the pathway one-carbon metabolism; tetrahydrofolate interconversion. Its pathway is amino-acid biosynthesis; glycine biosynthesis; glycine from L-serine: step 1/1. Functionally, catalyzes the reversible interconversion of serine and glycine with tetrahydrofolate (THF) serving as the one-carbon carrier. This reaction serves as the major source of one-carbon groups required for the biosynthesis of purines, thymidylate, methionine, and other important biomolecules. Also exhibits THF-independent aldolase activity toward beta-hydroxyamino acids, producing glycine and aldehydes, via a retro-aldol mechanism. This chain is Serine hydroxymethyltransferase 2, found in Vibrio parahaemolyticus serotype O3:K6 (strain RIMD 2210633).